Consider the following 311-residue polypeptide: D-alanine--D-alanine ligase (311 aa).

The region spanning 106–301 is the ATP-grasp domain; it reads KLLWRGAELP…FDELCWRILL (196 aa). 132 to 187 is a binding site for ATP; it reads IGSVGLPLMIKPAHEGSSIGMAKVERPEELEAARAEAARYDDLVLAERWIEGGEYT. Mg(2+) is bound by residues Asp255, Glu268, and Asn270.

It belongs to the D-alanine--D-alanine ligase family. It depends on Mg(2+) as a cofactor. Requires Mn(2+) as cofactor.

The protein localises to the cytoplasm. It carries out the reaction 2 D-alanine + ATP = D-alanyl-D-alanine + ADP + phosphate + H(+). It functions in the pathway cell wall biogenesis; peptidoglycan biosynthesis. Functionally, cell wall formation. This chain is D-alanine--D-alanine ligase, found in Alkalilimnicola ehrlichii (strain ATCC BAA-1101 / DSM 17681 / MLHE-1).